Consider the following 492-residue polypeptide: Probable cytosol aminopeptidase (492 aa).

Residues K259 and D264 each contribute to the Mn(2+) site. K271 is a catalytic residue. 3 residues coordinate Mn(2+): D283, D342, and E344. R346 is a catalytic residue.

Belongs to the peptidase M17 family. Mn(2+) is required as a cofactor.

The protein resides in the cytoplasm. It carries out the reaction Release of an N-terminal amino acid, Xaa-|-Yaa-, in which Xaa is preferably Leu, but may be other amino acids including Pro although not Arg or Lys, and Yaa may be Pro. Amino acid amides and methyl esters are also readily hydrolyzed, but rates on arylamides are exceedingly low.. The enzyme catalyses Release of an N-terminal amino acid, preferentially leucine, but not glutamic or aspartic acids.. In terms of biological role, presumably involved in the processing and regular turnover of intracellular proteins. Catalyzes the removal of unsubstituted N-terminal amino acids from various peptides. This Synechocystis sp. (strain ATCC 27184 / PCC 6803 / Kazusa) protein is Probable cytosol aminopeptidase (pepA).